The sequence spans 574 residues: Proline--tRNA ligase (574 aa).

The protein belongs to the class-II aminoacyl-tRNA synthetase family. ProS type 1 subfamily. In terms of assembly, homodimer.

The protein localises to the cytoplasm. The catalysed reaction is tRNA(Pro) + L-proline + ATP = L-prolyl-tRNA(Pro) + AMP + diphosphate. Functionally, catalyzes the attachment of proline to tRNA(Pro) in a two-step reaction: proline is first activated by ATP to form Pro-AMP and then transferred to the acceptor end of tRNA(Pro). As ProRS can inadvertently accommodate and process non-cognate amino acids such as alanine and cysteine, to avoid such errors it has two additional distinct editing activities against alanine. One activity is designated as 'pretransfer' editing and involves the tRNA(Pro)-independent hydrolysis of activated Ala-AMP. The other activity is designated 'posttransfer' editing and involves deacylation of mischarged Ala-tRNA(Pro). The misacylated Cys-tRNA(Pro) is not edited by ProRS. The chain is Proline--tRNA ligase from Buchnera aphidicola subsp. Baizongia pistaciae (strain Bp).